Consider the following 876-residue polypeptide: Protein argonaute 17 (876 aa).

Residues 246-338 form the PAZ domain; the sequence is PVVDYVAQLL…LPLEVCKIAE (93 aa). The Piwi domain occupies 514 to 834; the sequence is LLIVILPNNN…LSSRARCYIK (321 aa). The interval 839 to 859 is disordered; the sequence is GDSTSHTSLPSEEDSSAASET.

This sequence belongs to the argonaute family. Ago subfamily.

Probably involved in the RNA silencing pathway. May bind to short RNAs such as microRNAs (miRNAs) or short interfering RNAs (siRNAs), and represses the translation of mRNAs which are complementary to them. The sequence is that of Protein argonaute 17 (AGO17) from Oryza sativa subsp. japonica (Rice).